A 235-amino-acid chain; its full sequence is Phosphoribosylaminoimidazole-succinocarboxamide synthase (235 aa).

This sequence belongs to the SAICAR synthetase family.

The catalysed reaction is 5-amino-1-(5-phospho-D-ribosyl)imidazole-4-carboxylate + L-aspartate + ATP = (2S)-2-[5-amino-1-(5-phospho-beta-D-ribosyl)imidazole-4-carboxamido]succinate + ADP + phosphate + 2 H(+). The protein operates within purine metabolism; IMP biosynthesis via de novo pathway; 5-amino-1-(5-phospho-D-ribosyl)imidazole-4-carboxamide from 5-amino-1-(5-phospho-D-ribosyl)imidazole-4-carboxylate: step 1/2. The polypeptide is Phosphoribosylaminoimidazole-succinocarboxamide synthase (Streptococcus pneumoniae (strain JJA)).